A 252-amino-acid polypeptide reads, in one-letter code: Membrane protein insertase YidC (252 aa).

The first 20 residues, 1–20 (MRKKFGIIVALIALTTLLSG), serve as a signal peptide directing secretion. Cys-21 carries the N-palmitoyl cysteine lipid modification. Cys-21 carries S-diacylglycerol cysteine lipidation. A run of 5 helical transmembrane segments spans residues 59–79 (YGLAIIIVTLFVRLLLMPLNV), 129–149 (LAGCLPILVQMPIFVAMYHAI), 160–180 (FLWFQLGSPDYILPILTGLFT), 206–226 (IMLYVMPIMIGVMAFFFPAAL), and 228–248 (LYWVTGNIFMVFQTLLINKPM).

The protein belongs to the OXA1/ALB3/YidC family. Type 2 subfamily.

The protein resides in the cell membrane. Its function is as follows. Required for the insertion and/or proper folding and/or complex formation of integral membrane proteins into the membrane. Involved in integration of membrane proteins that insert both dependently and independently of the Sec translocase complex, as well as at least some lipoproteins. The sequence is that of Membrane protein insertase YidC from Oceanobacillus iheyensis (strain DSM 14371 / CIP 107618 / JCM 11309 / KCTC 3954 / HTE831).